The following is a 346-amino-acid chain: Probable choline kinase 3 (346 aa).

Residues arginine 71, glutamine 207, and aspartate 224 each contribute to the ATP site.

This sequence belongs to the choline/ethanolamine kinase family.

The catalysed reaction is choline + ATP = phosphocholine + ADP + H(+). It participates in phospholipid metabolism; phosphatidylcholine biosynthesis; phosphocholine from choline: step 1/1. Its function is as follows. Involved in phospholipid biosynthesis. Catalyzes the first step in phosphatidylcholine biosynthesis. This Arabidopsis thaliana (Mouse-ear cress) protein is Probable choline kinase 3.